The chain runs to 264 residues: Phosphonoacetaldehyde hydrolase (264 aa).

Asp9 acts as the Nucleophile in catalysis. Positions 9 and 11 each coordinate Mg(2+). The active-site Schiff-base intermediate with substrate is Lys50. A Mg(2+)-binding site is contributed by Asp183.

Belongs to the HAD-like hydrolase superfamily. PhnX family. As to quaternary structure, homodimer. Mg(2+) serves as cofactor.

It carries out the reaction phosphonoacetaldehyde + H2O = acetaldehyde + phosphate + H(+). Functionally, involved in phosphonate degradation. In Bacillus cereus (strain AH187), this protein is Phosphonoacetaldehyde hydrolase.